Here is a 510-residue protein sequence, read N- to C-terminus: 2,3-bisphosphoglycerate-independent phosphoglycerate mutase (510 aa).

2 residues coordinate Mn(2+): Asp14 and Ser64. Ser64 acts as the Phosphoserine intermediate in catalysis. Substrate-binding positions include His125, 155–156 (RD), Arg187, Arg193, 259–262 (RADR), and Lys332. 5 residues coordinate Mn(2+): Asp399, His403, Asp440, His441, and His459.

It belongs to the BPG-independent phosphoglycerate mutase family. In terms of assembly, monomer. Requires Mn(2+) as cofactor.

The enzyme catalyses (2R)-2-phosphoglycerate = (2R)-3-phosphoglycerate. It functions in the pathway carbohydrate degradation; glycolysis; pyruvate from D-glyceraldehyde 3-phosphate: step 3/5. In terms of biological role, catalyzes the interconversion of 2-phosphoglycerate and 3-phosphoglycerate. Essential for the growth and pathogenicity on the host plant. The polypeptide is 2,3-bisphosphoglycerate-independent phosphoglycerate mutase (Pseudomonas syringae pv. tomato (strain ATCC BAA-871 / DC3000)).